We begin with the raw amino-acid sequence, 517 residues long: uncharacterized protein (517 aa).

Disordered regions lie at residues 16–148 (KDES…TITK), 156–175 (VNKEINNNNNNNNNNNNTTT), and 216–351 (KLEK…EENE). A compositionally biased stretch (low complexity) spans 48–75 (NNNNNNNNTTTTNNNTNNSNTSTSNNSK). Positions 84–112 (FDDDDDDGDEEDEEEEDDDDDDDDDDDET) are enriched in acidic residues. A compositionally biased stretch (pro residues) spans 127-143 (QPQPQPQPQPQPQPPIK). The segment covering 236–252 (VSSTLSNSFDPNIIHNQ) has biased composition (polar residues). A compositionally biased stretch (pro residues) spans 254-266 (SPPPPPISIPIPL). Composition is skewed to low complexity over residues 271–320 (NLNN…NSNI) and 327–347 (SSSMVNNVNNNSSDNSSSNNN). Positions 340–452 (DNSSSNNNEE…HQNQQNSMNN (113 aa)) form a coiled coil.

This sequence belongs to the ENTR1 family.

This is an uncharacterized protein from Dictyostelium discoideum (Social amoeba).